The primary structure comprises 624 residues: DNA-directed RNA polymerase III subunit rpc-3 (624 aa).

2 disordered regions span residues 229–260 and 373–418; these read KRKL…EEDL and LAPK…ARMS. The span at 385 to 403 shows a compositional bias: acidic residues; it reads DDSDDDEEDGDYSDSDEEM. Positions 551–572 are leucine-zipper; it reads CYATMVHCLQVLEVRRQKDKDV.

It belongs to the RNA polymerase beta chain family. In terms of assembly, component of the RNA polymerase III (Pol III) complex consisting of 17 subunits.

It localises to the nucleus. In terms of biological role, DNA-dependent RNA polymerase catalyzes the transcription of DNA into RNA using the four ribonucleoside triphosphates as substrates. Specific core component of RNA polymerase III which synthesizes small RNAs, such as 5S rRNA and tRNAs. This chain is DNA-directed RNA polymerase III subunit rpc-3 (rpc-82), found in Neurospora crassa (strain ATCC 24698 / 74-OR23-1A / CBS 708.71 / DSM 1257 / FGSC 987).